A 355-amino-acid polypeptide reads, in one-letter code: Natterin-1 (355 aa).

The N-terminal stretch at 1–18 (MIPSVLLVTLLLLSWTSA) is a signal peptide. Positions 19–27 (EKDLKVRVA) are excised as a propeptide.

It belongs to the natterin family. In terms of processing, contains 4 disulfide bonds. As to expression, expressed by the venom gland.

It localises to the secreted. With respect to regulation, inhibited by tissue-kallikrein inhibitor TKI and trasylol. Plasma kallikrein inhibitor PKSI527 and classical inhibitors of serine-, metallo-, thiol- or aspartate-peptidases evokes a minor inhibition of the peptide digestion. In terms of biological role, shows nociceptive, edema-inducing and kininogenase activity with release of kallidin from low molecular weight kininogen. The cleavage occurs at Met-Lys bonds. The polypeptide is Natterin-1 (Thalassophryne nattereri (Copper Joe toadfish)).